We begin with the raw amino-acid sequence, 126 residues long: Protein ApaG (126 aa).

One can recognise an ApaG domain in the interval 2 to 126 (SDTQHQVNVR…FRLAVPGALH (125 aa)).

The polypeptide is Protein ApaG (Pseudomonas aeruginosa (strain LESB58)).